The primary structure comprises 676 residues: MYIVSMFGLAGLEALICFIFLFLFSFLTSFKASAQNPFYLNHDCPNRTTYSSNSTYSTNLKTLLSSFASRNASYSTGFQNIRAGQTPDRVTGLFLCRGDLSPEVCSNCVAFSVNESLTRCPNQREAVFYYEECILRYSHKNFLSTVTYEGELIMRNPNNISSIQNQRDQFIDLVQSNMNQAANEAANSSRKFSTIKTELTSLQTLYGLVQCTPDLARQDCFSCLTSSINRMMPLFRIGARQFWPSCNSRYELYAFYNETAIGTPSPPPLFPGSTPPLTSPSIPGKSGNSTVLVVAIVVLAVLLFIALVGYCFLAQRTKKTFDTASASEVGDDMATADSLQLDYRTIQTATNDFAESNKIGRGGFGEVYKGTFSNGKEVAVKRLSKNSRQGEAEFKTEVVVVAKLQHRNLVRLLGFSLQGEERILVYEYMPNKSLDCLLFDPTKQTQLDWMQRYNIIGGIARGILYLHQDSRLTIIHRDLKASNILLDADINPKIADFGMARIFGLDQTQDNTSRIVGTYGYMAPEYAMHGQFSMKSDVYSFGVLVLEIISGRKNSSFDESDGAQDLLTHTWRLWTNRTALDLVDPLIANNCQNSEVVRCIHIGLLCVQEDPAKRPTISTVFMMLTSNTVTLPVPRQPGFFIQSSPVKDPTDSDQSTTTKSTPASIDDELITDLYPR.

The first 34 residues, 1–34 (MYIVSMFGLAGLEALICFIFLFLFSFLTSFKASA), serve as a signal peptide directing secretion. The Extracellular portion of the chain corresponds to 35-291 (QNPFYLNHDC…IPGKSGNSTV (257 aa)). Gnk2-homologous domains are found at residues 38 to 142 (FYLN…HKNF) and 151 to 255 (ELIM…LYAF). N-linked (GlcNAc...) asparagine glycosylation is found at Asn46, Asn53, Asn71, Asn114, Asn159, Asn187, Asn257, and Asn288. The chain crosses the membrane as a helical span at residues 292-312 (LVVAIVVLAVLLFIALVGYCF). Topologically, residues 313–676 (LAQRTKKTFD…DELITDLYPR (364 aa)) are cytoplasmic. One can recognise a Protein kinase domain in the interval 353–639 (FAESNKIGRG…TLPVPRQPGF (287 aa)). Residues 359–367 (IGRGGFGEV) and Lys381 each bind ATP. Phosphotyrosine is present on Tyr426. Asp478 serves as the catalytic Proton acceptor. Ser482 carries the phosphoserine modification. Phosphothreonine is present on Thr518. Tyr526 is modified (phosphotyrosine). The tract at residues 640–666 (FIQSSPVKDPTDSDQSTTTKSTPASID) is disordered. Residues 652–662 (SDQSTTTKSTP) are compositionally biased toward low complexity.

Belongs to the protein kinase superfamily. Ser/Thr protein kinase family. CRK subfamily.

The protein resides in the membrane. It catalyses the reaction L-seryl-[protein] + ATP = O-phospho-L-seryl-[protein] + ADP + H(+). The catalysed reaction is L-threonyl-[protein] + ATP = O-phospho-L-threonyl-[protein] + ADP + H(+). The sequence is that of Cysteine-rich receptor-like protein kinase 8 (CRK8) from Arabidopsis thaliana (Mouse-ear cress).